A 481-amino-acid polypeptide reads, in one-letter code: UDP-glucose 6-dehydrogenase 1 (481 aa).

Residues 8–13 (GAGYVG), Asp33, Arg38, 86–90 (VNTPT), 127–128 (ST), and Glu162 each bind NAD(+). Substrate-binding positions include 158-162 (EFLAE), 217-224 (KLAANAFL), and 257-270 (RIGA…VGFG). Cys273 (nucleophile) is an active-site residue. 273–276 (CFQK) is an NAD(+) binding site. 335–336 (FK) is a binding site for substrate. Position 343 (Arg343) interacts with NAD(+). Ser394 carries the phosphoserine modification. Residue Arg448 coordinates substrate.

It belongs to the UDP-glucose/GDP-mannose dehydrogenase family.

The catalysed reaction is UDP-alpha-D-glucose + 2 NAD(+) + H2O = UDP-alpha-D-glucuronate + 2 NADH + 3 H(+). The protein operates within nucleotide-sugar biosynthesis; UDP-alpha-D-glucuronate biosynthesis; UDP-alpha-D-glucuronate from UDP-alpha-D-glucose: step 1/1. Functionally, involved in the biosynthesis of UDP-glucuronic acid (UDP-GlcA), providing nucleotide sugars for cell-wall polymers. This is UDP-glucose 6-dehydrogenase 1 (UGD1) from Oryza sativa subsp. japonica (Rice).